The primary structure comprises 98 residues: Large ribosomal subunit protein uL23 (98 aa).

The protein belongs to the universal ribosomal protein uL23 family. In terms of assembly, part of the 50S ribosomal subunit. Contacts protein L29, and trigger factor when it is bound to the ribosome.

Functionally, one of the early assembly proteins it binds 23S rRNA. One of the proteins that surrounds the polypeptide exit tunnel on the outside of the ribosome. Forms the main docking site for trigger factor binding to the ribosome. This Streptococcus pneumoniae serotype 19F (strain G54) protein is Large ribosomal subunit protein uL23.